The following is a 214-amino-acid chain: N-(5'-phosphoribosyl)anthranilate isomerase (214 aa).

This sequence belongs to the TrpF family.

It carries out the reaction N-(5-phospho-beta-D-ribosyl)anthranilate = 1-(2-carboxyphenylamino)-1-deoxy-D-ribulose 5-phosphate. It participates in amino-acid biosynthesis; L-tryptophan biosynthesis; L-tryptophan from chorismate: step 3/5. This chain is N-(5'-phosphoribosyl)anthranilate isomerase, found in Halorubrum lacusprofundi (strain ATCC 49239 / DSM 5036 / JCM 8891 / ACAM 34).